The chain runs to 93 residues: Secretoglobin family 3A member 2 (93 aa).

Positions 1–21 (MKLVTIFLLVTISLCSYSATA) are cleaved as a signal peptide.

Belongs to the secretoglobin family. UGRP subfamily. In terms of assembly, homodimer; disulfide-linked. Monomer. Interacts with APOA1. As to expression, highly expressed in lung and trachea. Detected throughout the airway epithelium in lung, with slightly higher expression in large airways. Found in lung submucosal gland acinus where it localizes to serous-like cells. Probably expressed in club cells of the bronchioles. Not detected in other tissues tested.

Its subcellular location is the secreted. In terms of biological role, secreted cytokine-like protein. Binds to the scavenger receptor MARCO. Can also bind to pathogens including the Gram-positive bacterium L.monocytogenes, the Gram-negative bacterium P.aeruginosa, and yeast. Strongly inhibits phospholipase A2 (PLA2G1B) activity. Seems to have anti-inflammatory effects in respiratory epithelium. Also has anti-fibrotic activity in lung. May play a role in fetal lung development and maturation. Promotes branching morphogenesis during early stages of lung development. In the pituitary, may inhibit production of follicle-stimulating hormone (FSH) and luteinizing hormone (LH). This Homo sapiens (Human) protein is Secretoglobin family 3A member 2 (SCGB3A2).